A 1088-amino-acid chain; its full sequence is RNA-directed RNA polymerase (1088 aa).

Residues 501–687 (LSYGDVTRFL…AKRYIAGGKI (187 aa)) form the RdRp catalytic domain.

The protein belongs to the reoviridae RNA-directed RNA polymerase family. As to quaternary structure, interacts with VP3 (Potential). Interacts with VP2; this interaction activates VP1. Interacts with NSP5; this interaction is probably necessary for the formation of functional virus factories. Interacts with NSP2; this interaction is weak. Mg(2+) serves as cofactor.

It localises to the virion. The enzyme catalyses RNA(n) + a ribonucleoside 5'-triphosphate = RNA(n+1) + diphosphate. Its function is as follows. RNA-directed RNA polymerase that is involved in both transcription and genome replication. Together with VP3 capping enzyme, forms an enzyme complex positioned near the channels situated at each of the five-fold vertices of the core. Following infection, the outermost layer of the virus is lost, leaving a double-layered particle (DLP) made up of the core and VP6 shell. VP1 then catalyzes the transcription of fully conservative plus-strand genomic RNAs that are extruded through the DLP's channels into the cytoplasm where they function as mRNAs for translation of viral proteins. One copy of each of the viral (+)RNAs is also recruited during core assembly, together with newly synthesized polymerase complexes and VP2. The polymerase of these novo-formed particles catalyzes the synthesis of complementary minus-strands leading to dsRNA formation. To do so, the polymerase specifically recognizes and binds 4 bases 5'-UGUG-3' in the conserved 3'-sequence of plus-strand RNA templates. VP2 presumably activates the autoinhibited VP1-RNA complex to coordinate packaging and genome replication. Once dsRNA synthesis is complete, the polymerase switches to the transcriptional mode, thus providing secondary transcription. This is RNA-directed RNA polymerase from Rotavirus A (strain RVA/Cow/United States/NCDV-Lincoln/1969/G6P6[1]) (RV-A).